Here is a 54-residue protein sequence, read N- to C-terminus: UPF0391 membrane protein Daro_2080 (54 aa).

2 helical membrane passes run 5 to 25 (AIVF…GIAA) and 30 to 50 (IAKI…VMGF).

Belongs to the UPF0391 family.

It is found in the cell membrane. This is UPF0391 membrane protein Daro_2080 from Dechloromonas aromatica (strain RCB).